Consider the following 347-residue polypeptide: Extracellular metalloprotease (347 aa).

The first 20 residues, 1-20 (MKSRPICSVIPPYILHRIIA), serve as a signal peptide directing secretion. The tract at residues 43-68 (SHHPRPEPHEKLPAGQANRSIHDAEQ) is disordered. His-162 contacts Zn(2+). Glu-163 is an active-site residue. Zn(2+)-binding residues include His-166 and Glu-186. Residue His-264 is the Proton donor of the active site.

It belongs to the peptidase M4 family. Ca(2+) is required as a cofactor. The cofactor is Zn(2+).

The protein localises to the secreted. The sequence is that of Extracellular metalloprotease (prt1) from Pectobacterium carotovorum subsp. carotovorum (Erwinia carotovora subsp. carotovora).